The following is a 940-amino-acid chain: DNA gyrase subunit A (940 aa).

Residues 1 to 22 (MSDHTNPPSAPPDDDPNGGSLL) form a disordered region. A Topo IIA-type catalytic domain is found at 48 to 538 (LPDARDGLKP…SLADQDDESL (491 aa)). Y136 functions as the O-(5'-phospho-DNA)-tyrosine intermediate in the catalytic mechanism. The short motif at 565-571 (QHRGGRG) is the GyrA-box element. Residues 914-924 (ESVDDNGDDAD) are compositionally biased toward acidic residues. The segment at 914–940 (ESVDDNGDDADSVAPAAPDGQVTDSDD) is disordered.

The protein belongs to the type II topoisomerase GyrA/ParC subunit family. As to quaternary structure, heterotetramer, composed of two GyrA and two GyrB chains. In the heterotetramer, GyrA contains the active site tyrosine that forms a transient covalent intermediate with DNA, while GyrB binds cofactors and catalyzes ATP hydrolysis.

The protein localises to the cytoplasm. The catalysed reaction is ATP-dependent breakage, passage and rejoining of double-stranded DNA.. Functionally, a type II topoisomerase that negatively supercoils closed circular double-stranded (ds) DNA in an ATP-dependent manner to modulate DNA topology and maintain chromosomes in an underwound state. Negative supercoiling favors strand separation, and DNA replication, transcription, recombination and repair, all of which involve strand separation. Also able to catalyze the interconversion of other topological isomers of dsDNA rings, including catenanes and knotted rings. Type II topoisomerases break and join 2 DNA strands simultaneously in an ATP-dependent manner. The sequence is that of DNA gyrase subunit A from Granulibacter bethesdensis (strain ATCC BAA-1260 / CGDNIH1).